We begin with the raw amino-acid sequence, 239 residues long: Large ribosomal subunit protein uL2 (239 aa).

The tract at residues 200-239 (VNHPHGGKEHHIGRPSTVSRRAPPGRKVGHIAARRTGRRK) is disordered. A compositionally biased stretch (basic residues) spans 222–239 (PPGRKVGHIAARRTGRRK).

It belongs to the universal ribosomal protein uL2 family. In terms of assembly, part of the 50S ribosomal subunit. Forms a bridge to the 30S subunit in the 70S ribosome.

Functionally, one of the primary rRNA binding proteins. Required for association of the 30S and 50S subunits to form the 70S ribosome, for tRNA binding and peptide bond formation. It has been suggested to have peptidyltransferase activity; this is somewhat controversial. Makes several contacts with the 16S rRNA in the 70S ribosome. This chain is Large ribosomal subunit protein uL2, found in Thermococcus onnurineus (strain NA1).